Consider the following 511-residue polypeptide: Glucose-6-phosphate 1-dehydrogenase (511 aa).

NADP(+) contacts are provided by residues 29–36 (GASGDLAK), Arg63, and Lys164. D-glucose 6-phosphate-binding positions include Lys164, 194–198 (HYLGK), Glu232, and Asp251. His256 serves as the catalytic Proton acceptor. Residue Lys347 participates in NADP(+) binding. Lys350 serves as a coordination point for D-glucose 6-phosphate. 3 residues coordinate NADP(+): Lys356, Arg360, and Arg382. A D-glucose 6-phosphate-binding site is contributed by Gln384. Residues 390-392 (YIK), 410-412 (DLT), and Arg477 each bind NADP(+).

The protein belongs to the glucose-6-phosphate dehydrogenase family.

It carries out the reaction D-glucose 6-phosphate + NADP(+) = 6-phospho-D-glucono-1,5-lactone + NADPH + H(+). The protein operates within carbohydrate degradation; pentose phosphate pathway; D-ribulose 5-phosphate from D-glucose 6-phosphate (oxidative stage): step 1/3. Functionally, catalyzes the rate-limiting step of the oxidative pentose-phosphate pathway, which represents a route for the dissimilation of carbohydrates besides glycolysis. The main function of this enzyme is to provide reducing power (NADPH) and pentose phosphates for fatty acid and nucleic acid synthesis. The sequence is that of Glucose-6-phosphate 1-dehydrogenase (gsdA) from Emericella nidulans (strain FGSC A4 / ATCC 38163 / CBS 112.46 / NRRL 194 / M139) (Aspergillus nidulans).